Consider the following 247-residue polypeptide: Carboxy-S-adenosyl-L-methionine synthase (247 aa).

Residues tyrosine 40, 65-67 (GSS), 90-91 (DN), 122-123 (DI), asparagine 137, and arginine 204 each bind S-adenosyl-L-methionine.

This sequence belongs to the class I-like SAM-binding methyltransferase superfamily. Cx-SAM synthase family. Homodimer.

The enzyme catalyses prephenate + S-adenosyl-L-methionine = carboxy-S-adenosyl-L-methionine + 3-phenylpyruvate + H2O. In terms of biological role, catalyzes the conversion of S-adenosyl-L-methionine (SAM) to carboxy-S-adenosyl-L-methionine (Cx-SAM). In Pseudomonas fluorescens (strain SBW25), this protein is Carboxy-S-adenosyl-L-methionine synthase.